Consider the following 729-residue polypeptide: U-box domain-containing protein 17 (729 aa).

One can recognise a U-box domain in the interval 304-378 (TVPKDFVCPI…VQWCTASGIS (75 aa)). ARM repeat units follow at residues 438–477 (KENRAYIAEAGAIPHLCRLLTSENAIAQENSVTAMLNLSI), 479–520 (EKNK…SLSA), 523–562 (EYKKRIAIVDQCVEALALLLQNGTPRGKKDAVTALYNLST), and 564–601 (PDNCSRMIEGGGVSSLVGALKNEGVAEEAAGALALLVR).

The enzyme catalyses S-ubiquitinyl-[E2 ubiquitin-conjugating enzyme]-L-cysteine + [acceptor protein]-L-lysine = [E2 ubiquitin-conjugating enzyme]-L-cysteine + N(6)-ubiquitinyl-[acceptor protein]-L-lysine.. Its pathway is protein modification; protein ubiquitination. In terms of biological role, functions as an E3 ubiquitin ligase. In Arabidopsis thaliana (Mouse-ear cress), this protein is U-box domain-containing protein 17 (PUB17).